The following is a 476-amino-acid chain: Protein transport protein SEC61 subunit alpha (476 aa).

Residues 1 to 33 lie on the Cytoplasmic side of the membrane; it reads MSSLRFLDLVKPFVPFLPEVQQPETKIPFNQKL. Residues 34-54 traverse the membrane as a helical segment; the sequence is MWTGLTLLIFLVMSQMPLYGI. Topologically, residues 55 to 76 are lumenal; that stretch reads VSSDTSDPLYWLRMMMASNRGT. A helical membrane pass occupies residues 77 to 97; the sequence is LMELGITPIISSGMVFQLLAG. Over 98–119 the chain is Cytoplasmic; that stretch reads THMIDVNLDLKADRELYQTAQK. A helical transmembrane segment spans residues 120-140; the sequence is LFAVILSIGTATVYVFTGLYG. The Lumenal portion of the chain corresponds to 141–146; it reads PPSDLG. Residues 147–167 form a helical membrane-spanning segment; that stretch reads AGIVFLLILQLVVAGMIVILL. The Cytoplasmic portion of the chain corresponds to 168 to 246; the sequence is DELLQKGYGL…YRQNLPNIMN (79 aa). The chain crosses the membrane as a helical span at residues 247-267; it reads LLATLVVFAAVIYLQGFRVEI. At 268-361 the chain is on the lumenal side; that stretch reads PVKSSRQRGA…KDALLDPIHT (94 aa). A helical transmembrane segment spans residues 362–382; it reads AVYIAYMLTACAVFSKTWIEV. The Cytoplasmic segment spans residues 383-415; it reads SGSSPRDVAKQLKDQGLVMAGHREQSMYKELKR. A helical transmembrane segment spans residues 416-434; the sequence is IIPTAAAFGGACIGALSVA. Over 435-440 the chain is Lumenal; the sequence is SDLMGA. Residues 441-458 traverse the membrane as a helical segment; the sequence is LGSGTGTLLAVTIIYGYF. Residues 459-476 are Cytoplasmic-facing; the sequence is EIAAKEGDLQGMKGMIMG.

This sequence belongs to the SecY/SEC61-alpha family. As to quaternary structure, heterotrimeric complex composed of SEC61-alpha, SEC61-beta and SEC61-gamma.

The protein localises to the endoplasmic reticulum membrane. Functionally, appears to play a crucial role in the insertion of secretory and membrane polypeptides into the ER. It is required for assembly of membrane and secretory proteins and is essential for cell growth. It interacts with other membrane proteins required for protein translocation. Upon binding to SEC62/63 complex, secretory precursor polypeptides may engage SEC61 to begin membrane penetration event. A cycle of assembly and disassembly of SEC62/63 from SEC61 may govern the activity of the translocase. The polypeptide is Protein transport protein SEC61 subunit alpha (sec-61) (Neurospora crassa (strain ATCC 24698 / 74-OR23-1A / CBS 708.71 / DSM 1257 / FGSC 987)).